A 496-amino-acid polypeptide reads, in one-letter code: 3-octaprenyl-4-hydroxybenzoate carboxy-lyase (496 aa).

Asn-181 provides a ligand contact to Mn(2+). Residues 184-186, 198-200, and 203-204 each bind prenylated FMN; these read IYR, RWL, and RG. Glu-247 serves as a coordination point for Mn(2+). Catalysis depends on Asp-296, which acts as the Proton donor.

The protein belongs to the UbiD family. As to quaternary structure, homohexamer. Prenylated FMN serves as cofactor. Mn(2+) is required as a cofactor.

It is found in the cell membrane. It catalyses the reaction a 4-hydroxy-3-(all-trans-polyprenyl)benzoate + H(+) = a 2-(all-trans-polyprenyl)phenol + CO2. It participates in cofactor biosynthesis; ubiquinone biosynthesis. Catalyzes the decarboxylation of 3-octaprenyl-4-hydroxy benzoate to 2-octaprenylphenol, an intermediate step in ubiquinone biosynthesis. The chain is 3-octaprenyl-4-hydroxybenzoate carboxy-lyase from Azoarcus sp. (strain BH72).